A 246-amino-acid polypeptide reads, in one-letter code: Breast cancer metastasis-suppressor 1 (246 aa).

Residues 1–57 (MPVQPPSKDTEEMEAEGDSAAEMNGEEEESEEERSGSQTESEEESSEMDDEDYERRR) are disordered. 2 stretches are compositionally biased toward acidic residues: residues 11–32 (EEMEAEGDSAAEMNGEEEESEE) and 40–52 (ESEEESSEMDDED). A coiled-coil region spans residues 51 to 98 (EDYERRRSECVSEMLDLEKQFSELKEKLFRERLSQLRLRLEEVGAERA). Glycyl lysine isopeptide (Lys-Gly) (interchain with G-Cter in SUMO2) cross-links involve residues K184 and K242.

Belongs to the BRMS1 family. As to quaternary structure, homohexamer (Potential). Interacts with SNX6, HDAC1 and RELA. Interacts with ARID4A. Identified in mSin3A corepressor complexes together with SIN3A, SIN3B, RBBP4, RBBP7, SAP30, SUDS3, ARID4A, HDAC1 and HDAC2. Interacts with SPOP; this recruits the protein to a ubiquitin ligase complex containing SPOP and CUL3. Ubiquitinated by a cullin-RING-based BCR (BTB-CUL3-RBX1) E3 ubiquitin-protein ligase complex containing SPOP, leading to proteasomal degradation. As to expression, expression levels are higher in term placentas than in early placentas. Low levels of expression observed in normal pregnancies and in molar pregnancies.

It is found in the nucleus. Its subcellular location is the cytoplasm. In terms of biological role, transcriptional repressor. Down-regulates transcription activation by NF-kappa-B by promoting the deacetylation of RELA at 'Lys-310'. Promotes HDAC1 binding to promoter regions. Down-regulates expression of anti-apoptotic genes that are controlled by NF-kappa-B. Promotes apoptosis in cells that have inadequate adherence to a substrate, a process called anoikis, and may thereby inhibit metastasis. May be a mediator of metastasis suppression in breast carcinoma. The protein is Breast cancer metastasis-suppressor 1 (BRMS1) of Homo sapiens (Human).